The following is a 313-amino-acid chain: Short-chain dehydrogenase/reductase family 9C member 7 (313 aa).

Residue 29-53 participates in NADP(+) binding; it reads FITGCDSGFGNLLARQLVDRGMRVL. Residue Ser-160 participates in substrate binding. Tyr-172 acts as the Proton acceptor in catalysis. Position 185 is a phosphoserine (Ser-185).

Belongs to the short-chain dehydrogenases/reductases (SDR) family.

Its subcellular location is the cytoplasm. The catalysed reaction is a N-[omega-(9R,10R)-epoxy-(13R)-hydroxy-(11E)-octadecenoyloxy]acyl-beta-D-glucosyl-(1&lt;-&gt;1)-sphing-4E-enine + NAD(+) = a N-[omega-(9R,10R)-epoxy-13-oxo-(11E)-octadecenoyloxy]acyl-beta-D-glucosyl-(1&lt;-&gt;1)-sphing-4E-enine + NADH + H(+). The enzyme catalyses a N-[omega-(9R,10R)-epoxy-(13R)-hydroxy-(11E)-octadecenoyloxy]-acylsphing-4E-enine + NAD(+) = a N-[omega-(9R,10R)-epoxy-13-oxo-(11E)-octadecenoyloxy]-acylsphing-4E-enine + NADH + H(+). Plays a crucial role in the formation of the epidermal permeability barrier. Catalyzes the NAD+-dependent dehydrogenation of the linoleate 9,10-trans-epoxy-11E-13-alcohol esterified in omega-O-acylceramides (such as in N-[omega-(9R,10R)-epoxy-(13R)-hydroxy-(11E)-octadecenoyloxy]-acylsphing-4E-enine) to the corresponding 13-ketone, the reactive moiety required for binding of epidermal ceramides to proteins. Displays weak conversion of all-trans-retinal to all-trans-retinol in the presence of NADH. Has apparently no steroid dehydrogenase activity. This is Short-chain dehydrogenase/reductase family 9C member 7 (SDR9C7) from Bos taurus (Bovine).